A 75-amino-acid polypeptide reads, in one-letter code: ATP synthase subunit c (75 aa).

2 consecutive transmembrane segments (helical) span residues 4 to 24 (GLIAIGIGISMISGLGVGLGQ) and 54 to 74 (AVAESAAIYALVISILLMFAF).

The protein belongs to the ATPase C chain family. As to quaternary structure, F-type ATPases have 2 components, F(1) - the catalytic core - and F(0) - the membrane proton channel. F(1) has five subunits: alpha(3), beta(3), gamma(1), delta(1), epsilon(1). F(0) has three main subunits: a(1), b(2) and c(10-14). The alpha and beta chains form an alternating ring which encloses part of the gamma chain. F(1) is attached to F(0) by a central stalk formed by the gamma and epsilon chains, while a peripheral stalk is formed by the delta and b chains.

It localises to the cell membrane. F(1)F(0) ATP synthase produces ATP from ADP in the presence of a proton or sodium gradient. F-type ATPases consist of two structural domains, F(1) containing the extramembraneous catalytic core and F(0) containing the membrane proton channel, linked together by a central stalk and a peripheral stalk. During catalysis, ATP synthesis in the catalytic domain of F(1) is coupled via a rotary mechanism of the central stalk subunits to proton translocation. In terms of biological role, key component of the F(0) channel; it plays a direct role in translocation across the membrane. A homomeric c-ring of between 10-14 subunits forms the central stalk rotor element with the F(1) delta and epsilon subunits. The polypeptide is ATP synthase subunit c (Mycoplasmopsis agalactiae (strain NCTC 10123 / CIP 59.7 / PG2) (Mycoplasma agalactiae)).